We begin with the raw amino-acid sequence, 408 residues long: Cytochrome P450 55A3 (408 aa).

Cys-357 contacts heme.

Belongs to the cytochrome P450 family. It depends on heme as a cofactor.

The polypeptide is Cytochrome P450 55A3 (CYP55A3) (Fusarium lichenicola (Cylindrocarpon lichenicola)).